The following is a 163-amino-acid chain: uncharacterized protein (163 aa).

4 consecutive 4Fe-4S ferredoxin-type domains span residues 30–59 (REII…YSSD), 61–90 (LYIT…IIRL), 105–136 (KYEF…EYGS), and 136–163 (SKIR…IILR). [4Fe-4S] cluster contacts are provided by cysteine 39, cysteine 42, cysteine 45, cysteine 49, cysteine 70, cysteine 73, cysteine 76, cysteine 80, cysteine 116, cysteine 119, cysteine 122, cysteine 126, cysteine 145, cysteine 148, cysteine 151, and cysteine 155.

This is an uncharacterized protein from Methanocaldococcus jannaschii (strain ATCC 43067 / DSM 2661 / JAL-1 / JCM 10045 / NBRC 100440) (Methanococcus jannaschii).